Here is a 458-residue protein sequence, read N- to C-terminus: Glycine--tRNA ligase (458 aa).

Substrate-binding residues include Arg97 and Glu171. Residues 203 to 205 (RNE), 213 to 218 (FRTREF), 287 to 288 (EL), and 331 to 334 (GADR) each bind ATP. 218 to 222 (FEQME) contributes to the substrate binding site. 327–331 (EPSLG) serves as a coordination point for substrate.

It belongs to the class-II aminoacyl-tRNA synthetase family. In terms of assembly, homodimer.

Its subcellular location is the cytoplasm. It catalyses the reaction tRNA(Gly) + glycine + ATP = glycyl-tRNA(Gly) + AMP + diphosphate. In terms of biological role, catalyzes the attachment of glycine to tRNA(Gly). This Bacillus thuringiensis subsp. konkukian (strain 97-27) protein is Glycine--tRNA ligase.